We begin with the raw amino-acid sequence, 434 residues long: MKTRTQQIEELQKEWTQPRWEGITRPYSAEEVVKLRGSVNPECTLAQLGAAKMWRLLHGEAKKGYINSLGALTGGQALQQAKAGIEAIYLSGWQVAADANLASSMYPDQSLYPANSVPAVVDRINNTFRRADQIQWASGIEPNDPRYVDYFLPIVADAEAGFGGVLNAFELMKSMIEAGAAAVHFEDQLASVKKCGHMGGKVLVPTQEAIQKLVAARLAADVMGVPTLVIARTDADAADLITSDCDPYDSGFITGERTSEGFYRTHAGIEQAISRGLAYAPYADLVWCETSTPDLELARRFADAIHAKYPGKLLAYNCSPSFNWQKNLDDKTIASFQQQLSDMGYKYQFITLAGIHSMWFNMFDLAHAYAQGEGMKHYVEKVQQPEFAAAKDGYTFVSHQQEVGTGYFDKVTTIIQGGASSVTALTGSTEEAQF.

Residue 91-93 (SGW) participates in substrate binding. Asp157 is a Mg(2+) binding site. Cys195 (proton acceptor) is an active-site residue. Residues 196 to 197 (GH), Arg232, 317 to 321 (NCSPS), and Thr351 contribute to the substrate site.

It belongs to the isocitrate lyase/PEP mutase superfamily. Isocitrate lyase family. As to quaternary structure, homotetramer. It depends on Mg(2+) as a cofactor.

The enzyme catalyses D-threo-isocitrate = glyoxylate + succinate. Its pathway is carbohydrate metabolism; glyoxylate cycle; (S)-malate from isocitrate: step 1/2. Its function is as follows. Involved in the metabolic adaptation in response to environmental changes. Catalyzes the reversible formation of succinate and glyoxylate from isocitrate, a key step of the glyoxylate cycle, which operates as an anaplerotic route for replenishing the tricarboxylic acid cycle during growth on fatty acid substrates. This Salmonella typhimurium (strain LT2 / SGSC1412 / ATCC 700720) protein is Isocitrate lyase (aceA).